A 432-amino-acid polypeptide reads, in one-letter code: Homeobox protein Hox-D3 (432 aa).

Disordered stretches follow at residues 43 to 62 (YSTP…LDTD), 68 to 197 (CSIQ…SKRV), 253 to 280 (QKAK…AGHV), and 400 to 432 (HHGP…LTHL). A compositionally biased stretch (gly residues) spans 97-106 (NSQGGGGGSQ). Over residues 116-131 (PPQPPPPPPTLPPSSP) the composition is skewed to pro residues. The segment covering 148–158 (NASSSSATISK) has biased composition (polar residues). Positions 160–165 (IFPWMK) match the Antp-type hexapeptide motif. Positions 194–253 (SKRVRTAYTSAQLVELEKEFHFNRYLCRPRRVEMANLLNLTERQIKIWFQNRRMKYKKDQ) form a DNA-binding region, homeobox.

It belongs to the Antp homeobox family.

It is found in the nucleus. In terms of biological role, sequence-specific transcription factor which is part of a developmental regulatory system that provides cells with specific positional identities on the anterior-posterior axis. In Homo sapiens (Human), this protein is Homeobox protein Hox-D3 (HOXD3).